The chain runs to 410 residues: 2-oxoglutarate-dependent dioxygenase AOP3 (410 aa).

The 98-residue stretch at 258–355 (GNASVGAKEA…RYAAALFSYP (98 aa)) folds into the Fe2OG dioxygenase domain. Fe cation contacts are provided by His278, Asp280, and His335. Arg346 contributes to the 2-oxoglutarate binding site.

This sequence belongs to the iron/ascorbate-dependent oxidoreductase family. Requires Fe(2+) as cofactor.

Functionally, 2-oxoglutarate-dependent dioxygenase involved in glucosinolates biosynthesis. Catalyzes the conversion of methylsulfinylalkyl glucosinolates to hydroxyalkyl glucosinolates. This is 2-oxoglutarate-dependent dioxygenase AOP3 (AOP3) from Arabidopsis thaliana (Mouse-ear cress).